We begin with the raw amino-acid sequence, 494 residues long: Glutamyl-tRNA(Gln) amidotransferase subunit A (494 aa).

Catalysis depends on charge relay system residues Lys80 and Ser160. A disordered region spans residues 140–168 (GNVISPWRRPGDTAPLAPGGSSGGSSSAV). Residue Ser184 is the Acyl-ester intermediate of the active site.

It belongs to the amidase family. GatA subfamily. As to quaternary structure, heterotrimer of A, B and C subunits.

It catalyses the reaction L-glutamyl-tRNA(Gln) + L-glutamine + ATP + H2O = L-glutaminyl-tRNA(Gln) + L-glutamate + ADP + phosphate + H(+). Allows the formation of correctly charged Gln-tRNA(Gln) through the transamidation of misacylated Glu-tRNA(Gln) in organisms which lack glutaminyl-tRNA synthetase. The reaction takes place in the presence of glutamine and ATP through an activated gamma-phospho-Glu-tRNA(Gln). This Novosphingobium aromaticivorans (strain ATCC 700278 / DSM 12444 / CCUG 56034 / CIP 105152 / NBRC 16084 / F199) protein is Glutamyl-tRNA(Gln) amidotransferase subunit A.